The chain runs to 298 residues: MDTSEPQESPKSLSNVKHIILILSGKGGVGKSSVTTQTALTLVNKGFNTGVLDIDLTGPSLPRMFGVETKQVHQSSAGWVPVSVYNNGQEKNEENKRGNLSLMSLGFLIGNRNSSVVWRGPKKTAMIRQFLKDVVWSGGENNVPLDYLLIDTPPGTSDEHIAIAEELRWANPDGAIIVTTPQQVATADVRKEINFCKKVNFDVLGVVENMSGFICPHCSECTNIFSSGGGKELSEKLDLQFLGNIPIDPSFVEMVEMQDNDQNDGKKKLVDLYDDCELKGIMEGIVDKVLEQQHPARF.

25–32 lines the ATP pocket; it reads GKGGVGKS. [4Fe-4S] cluster is bound by residues C215 and C218.

This sequence belongs to the Mrp/NBP35 ATP-binding proteins family. NUBP2/CFD1 subfamily. Heterotetramer of 2 NBP35 and 2 CFD1 chains. It depends on [4Fe-4S] cluster as a cofactor.

It is found in the cytoplasm. In terms of biological role, component of the cytosolic iron-sulfur (Fe/S) protein assembly (CIA) machinery. Required for maturation of extramitochondrial Fe-S proteins. The NBP35-CFD1 heterotetramer forms a Fe-S scaffold complex, mediating the de novo assembly of an Fe-S cluster and its transfer to target apoproteins. Required for biogenesis and export of both ribosomal subunits, which may reflect a role in assembly of the Fe/S clusters in RLI1, a protein which performs rRNA processing and ribosome export. This chain is Cytosolic Fe-S cluster assembly factor CFD1, found in Debaryomyces hansenii (strain ATCC 36239 / CBS 767 / BCRC 21394 / JCM 1990 / NBRC 0083 / IGC 2968) (Yeast).